A 235-amino-acid chain; its full sequence is Carboxy-S-adenosyl-L-methionine synthase (235 aa).

Residues tyrosine 35, 60–62 (GCS), 83–84 (DN), asparagine 124, and arginine 191 each bind S-adenosyl-L-methionine.

Belongs to the class I-like SAM-binding methyltransferase superfamily. Cx-SAM synthase family. Homodimer.

It catalyses the reaction prephenate + S-adenosyl-L-methionine = carboxy-S-adenosyl-L-methionine + 3-phenylpyruvate + H2O. Functionally, catalyzes the conversion of S-adenosyl-L-methionine (SAM) to carboxy-S-adenosyl-L-methionine (Cx-SAM). In Campylobacter jejuni subsp. jejuni serotype O:6 (strain 81116 / NCTC 11828), this protein is Carboxy-S-adenosyl-L-methionine synthase.